Here is a 748-residue protein sequence, read N- to C-terminus: MEHTYQYAWIIPFLPLPVPMLIGVGLLLVPRATKNLRRMWAFPSVLLLSIVMIFSADLSIQQLNGSSIYQYVWSWTINNDFSLEFGYLIDPLTSIMSILITTVGIMVLVYSDNYMSHDQGYLRFFAYMSFSNTSMLGLVTSSNLIQIYIFWELVGMCSYLLIGFWFTRPIAANACQKAFVTNRVGDFGLLLGILGLYWITGSFEFRDLFEIFNNLIYNNRVNSLFVTLCASLLFVGAVAKSAQFPLHIWLPDAMEGPTPISALIHAATMVAAGIFLVARLFPLFTVIPYIMNLISLIGIITVLLGATLALAQKDIKRSLAYSTMSQLGYTMLALGMGSYRAALFHLITHAYSKALLFLGSGSIIHSMETVVGYSPEKSQNMALMGGLTKYAPITKTAFLLGTLSLCGIPPLACFWSKDEILNDSWLYSPIFAIIACSTAGLTAFYMFRMYLLTFEGHLNVHFQNYSGKKNSSFYSISIWGKKETKTINIRKYFCLSTLSTMNDNEKDSYFLKKGYPIHGNVRSMARPLITISHFGNKETFPYPHESDNTMLLPLLVLVLFTLFVGFIGIPFDQEGMDLDILSKWLAPSINLLHPNLSNSVDWYEFITNAIFSVSIAYFGIFIASLLYRPVYSSFQNLELINFFVKMGPNRILWDQLLNIIYNWSYNRGYIDFFYAKTFIRGIRGLAELTHFFDRRVIDGITNGVGVTSFFVGEGIKYVGGGRISSYLFLYLSYVLIFLLISYFLFLNL.

16 helical membrane passes run 9–29 (WIIPFLPLPVPMLIGVGLLLV), 40–60 (WAFPSVLLLSIVMIFSADLSI), 89–109 (IDPLTSIMSILITTVGIMVLV), 121–140 (YLRFFAYMSFSNTSMLGLVT), 147–167 (IYIFWELVGMCSYLLIGFWFT), 185–205 (GDFGLLLGILGLYWITGSFEF), 224–244 (LFVTLCASLLFVGAVAKSAQF), 258–278 (TPISALIHAATMVAAGIFLVA), 280–300 (LFPLFTVIPYIMNLISLIGII), 327–347 (LGYTMLALGMGSYRAALFHLI), 354–374 (ALLFLGSGSIIHSMETVVGYS), 396–416 (TAFLLGTLSLCGIPPLACFWS), 425–445 (WLYSPIFAIIACSTAGLTAFY), 551–571 (LLPLLVLVLFTLFVGFIGIPF), 605–625 (FITNAIFSVSIAYFGIFIASL), and 726–746 (YLFLYLSYVLIFLLISYFLFL).

It belongs to the complex I subunit 5 family. NDH is composed of at least 16 different subunits, 5 of which are encoded in the nucleus.

The protein localises to the plastid. It is found in the chloroplast thylakoid membrane. It carries out the reaction a plastoquinone + NADH + (n+1) H(+)(in) = a plastoquinol + NAD(+) + n H(+)(out). It catalyses the reaction a plastoquinone + NADPH + (n+1) H(+)(in) = a plastoquinol + NADP(+) + n H(+)(out). In terms of biological role, NDH shuttles electrons from NAD(P)H:plastoquinone, via FMN and iron-sulfur (Fe-S) centers, to quinones in the photosynthetic chain and possibly in a chloroplast respiratory chain. The immediate electron acceptor for the enzyme in this species is believed to be plastoquinone. Couples the redox reaction to proton translocation, and thus conserves the redox energy in a proton gradient. The chain is NAD(P)H-quinone oxidoreductase subunit 5, chloroplastic (ndhF) from Platanus occidentalis (Sycamore).